The primary structure comprises 1853 residues: DNA-directed RNA polymerase II subunit RPB1 (1853 aa).

Zn(2+)-binding residues include Cys-66, Cys-69, Cys-76, His-79, Cys-106, Cys-109, Cys-149, and Cys-177. The lid loop stretch occupies residues 256–268; sequence PAVVTFGSAKNQD. Residues 314 to 331 are rudder loop; that stretch reads NCIPGLPTATQKGGRPLK. Mg(2+)-binding residues include Asp-489, Asp-491, and Asp-493. The bridging helix stretch occupies residues 827–839; sequence PSEFFFHAMGGRE. A Glycyl lysine isopeptide (Lys-Gly) (interchain with G-Cter in ubiquitin) cross-link involves residue Lys-1260. 2 disordered regions span residues 1520–1568 and 1589–1853; these read PWSP…PRTP and SPHY…DPQN. Composition is skewed to low complexity over residues 1589 to 1811 and 1821 to 1853; these read SPHY…TPSP and YSPSSPTYSPSSPTYSPASPSYSPSSPTYDPQN. Tandem repeats lie at residues 1592 to 1598, 1599 to 1605, 1616 to 1622, 1623 to 1629, 1630 to 1636, 1637 to 1643, 1644 to 1650, 1651 to 1657, 1658 to 1664, 1665 to 1671, 1679 to 1685, 1686 to 1692, 1693 to 1699, 1700 to 1706, 1707 to 1713, 1717 to 1723, 1724 to 1730, 1731 to 1737, 1752 to 1758, 1759 to 1765, 1779 to 1785, 1786 to 1792, 1800 to 1806, 1821 to 1827, 1828 to 1834, and 1842 to 1848. Residues 1592–1848 are C-terminal domain (CTD); 26 X 7 AA approximate tandem repeats of Y-[ST]-P-[ST]-S-P-[AGKNQRST]; the sequence is YSPTSPSYSP…SPSYSPSSPT (257 aa).

This sequence belongs to the RNA polymerase beta' chain family. As to quaternary structure, component of the RNA polymerase II (Pol II) complex consisting of 12 subunits. Interacts with sig-7. In terms of processing, the tandem 7 residues repeats in the C-terminal domain (CTD) can be highly phosphorylated. The phosphorylation activates Pol II. Phosphorylation occurs mainly at residues 'Ser-2' and 'Ser-5' of the heptapeptide repeat and starts at the 3- to 4-cell embryonic stage. This phosphorylation also occurs in the early stages of oocyte development and is not detected in oocytes arrested at the meiotic diakinesis stage. In the somatic lineage, phosphorylation at 'Ser-2' is mediated by cdk-12 downstream of cdk-9 whereas in the germline lineage cdk-12 phosphorylates 'Ser-2' independently of cdk-9. Phosphorylation is likely mediated by cdk-7. May be dephosphorylated by fcp-1 in diakinetic oocytes and in 1-cell and 2-cell embryos. Dephosphorylated at 'Ser-5' of the heptapeptide repeat by ssup-72. The phosphorylation state is believed to result from the balanced action of site-specific CTD kinases and phosphatase, and a 'CTD code' that specifies the position of Pol II within the transcription cycle has been proposed. Post-translationally, following transcription stress, the elongating form of RNA polymerase II (RNA pol IIo) is polyubiquitinated via 'Lys-63'-linkages on Lys-1260 at DNA damage sites without leading to degradation: ubiquitination promotes RNA pol IIo backtracking to allow access by the transcription-coupled nucleotide excision repair (TC-NER) machinery. Subsequent DEF1-dependent polyubiquitination by the elongin complex via 'Lys-48'-linkages may lead to proteasome-mediated degradation; presumably at stalled RNA pol II where TC-NER has failed, to halt global transcription and enable 'last resort' DNA repair pathways.

It localises to the nucleus. The protein localises to the chromosome. The enzyme catalyses RNA(n) + a ribonucleoside 5'-triphosphate = RNA(n+1) + diphosphate. Functionally, DNA-dependent RNA polymerase catalyzes the transcription of DNA into RNA using the four ribonucleoside triphosphates as substrates. Largest and catalytic component of RNA polymerase II which synthesizes mRNA precursors and many functional non-coding RNAs. Forms the polymerase active center together with the second largest subunit. Pol II is the central component of the basal RNA polymerase II transcription machinery. It is composed of mobile elements that move relative to each other. RPB1 is part of the core element with the central large cleft, the clamp element that moves to open and close the cleft and the jaws that are thought to grab the incoming DNA template. At the start of transcription, a single-stranded DNA template strand of the promoter is positioned within the central active site cleft of Pol II. A bridging helix emanates from RPB1 and crosses the cleft near the catalytic site and is thought to promote translocation of Pol II by acting as a ratchet that moves the RNA-DNA hybrid through the active site by switching from straight to bent conformations at each step of nucleotide addition. During transcription elongation, Pol II moves on the template as the transcript elongates. Elongation is influenced by the phosphorylation status of the C-terminal domain (CTD) of Pol II largest subunit (RPB1), which serves as a platform for assembly of factors that regulate transcription initiation, elongation, termination and mRNA processing. Involved in the transcription of several genes including those involved in embryogenesis. This is DNA-directed RNA polymerase II subunit RPB1 from Caenorhabditis briggsae.